A 165-amino-acid chain; its full sequence is Ubiquitin-conjugating enzyme E2 G2 (165 aa).

An N-acetylalanine modification is found at Ala-2. The 161-residue stretch at 4–164 folds into the UBC core domain; it reads TALKRLMAEY…AKQIVQKSLG (161 aa). Cys-89 acts as the Glycyl thioester intermediate in catalysis.

Belongs to the ubiquitin-conjugating enzyme family. In terms of assembly, interacts with AUP1 (via C-terminus); the interaction recruits UBE2G2 to lipid droplets. Interacts with ubiquitin ligases AMFR/gp78 and RNF139/TRC8; recruitment to lipid droplets by AUP1 facilitates interaction of UBE2G2 with AMFR and RNF139, leading to sterol-induced ubiquitination of 3-hydroxy-3-methylglutaryl coenzyme A reductase and its subsequent proteasomal degradation.

The protein localises to the endoplasmic reticulum. It localises to the lipid droplet. It catalyses the reaction S-ubiquitinyl-[E1 ubiquitin-activating enzyme]-L-cysteine + [E2 ubiquitin-conjugating enzyme]-L-cysteine = [E1 ubiquitin-activating enzyme]-L-cysteine + S-ubiquitinyl-[E2 ubiquitin-conjugating enzyme]-L-cysteine.. It functions in the pathway protein modification; protein ubiquitination. Functionally, accepts ubiquitin from the E1 complex and catalyzes its covalent attachment to other proteins. In vitro catalyzes 'Lys-48'-linked polyubiquitination. Involved in endoplasmic reticulum-associated degradation (ERAD). Required for sterol-induced ubiquitination of 3-hydroxy-3-methylglutaryl coenzyme A reductase and its subsequent proteasomal degradation. This is Ubiquitin-conjugating enzyme E2 G2 from Homo sapiens (Human).